A 2605-amino-acid chain; its full sequence is Non-reducing polyketide synthase dbaI (2605 aa).

Residues 97–243 form an N-terminal acylcarrier protein transacylase domain (SAT) region; the sequence is PNTLLIPLVM…PASEISDLHR (147 aa). Cys-144 (nucleophile; for transacylase activity) is an active-site residue. His-262 functions as the Proton donor/acceptor; for transacylase activity in the catalytic mechanism. A Ketosynthase family 3 (KS3) domain is found at 382–798; it reads ENDIAVVGMS…GSNASIVVTQ (417 aa). Catalysis depends on for beta-ketoacyl synthase activity residues Cys-547, His-682, and His-721. The segment at 908–1195 is malonyl-CoA:ACP transacylase (MAT) domain; sequence FGGQVSTFVG…VTNMASRALG (288 aa). The segment at 1285–1420 is N-terminal hotdog fold; the sequence is PNTLLTFVGY…GRVIFRSISD (136 aa). Positions 1285 to 1596 constitute a PKS/mFAS DH domain; it reads PNTLLTFVGY…YVKIPKASMS (312 aa). The interval 1316 to 1594 is product template (PT) domain; sequence LIRGHIIAQT…ISYVKIPKAS (279 aa). His-1320 acts as the Proton acceptor; for dehydratase activity in catalysis. The interval 1447 to 1596 is C-terminal hotdog fold; it reads EVDEVLQNRN…YVKIPKASMS (150 aa). Asp-1504 serves as the catalytic Proton donor; for dehydratase activity. Positions 1665–1739 constitute a Carrier domain; sequence GQLTQRIKSI…SLIKCVRKAM (75 aa). Ser-1699 bears the O-(pantetheine 4'-phosphoryl)serine mark. The tract at residues 1742 to 1780 is disordered; sequence DADSAEYTTEQSTSEAADSDDKSTNYTTPSTPGEEALDM. Positions 1747-1757 are enriched in polar residues; that stretch reads EYTTEQSTSEA. The segment at 1963–2151 is methyltransferase domain; that stretch reads DWPLNRLFYR…VGYGHVDWTD (189 aa). An NADPH-binding (R) domain region spans residues 2230-2473; that stretch reads VTGATGSLGC…LSWTPVDVVA (244 aa).

The catalysed reaction is 4 malonyl-CoA + acetyl-CoA + AH2 + S-adenosyl-L-methionine + 3 H(+) = 2,4-dihydroxy-3-methyl-6-(2-oxopropyl)benzaldehyde + A + S-adenosyl-L-homocysteine + 4 CO2 + 5 CoA + H2O. It participates in secondary metabolite biosynthesis. Functionally, non-reducing polyketide synthase; part of the gene cluster that mediates the biosynthesis of the antibiotic 2,4-dihydroxy-3-methyl-6-(2-oxopropyl)benzaldehyde (DHMBA) and its derivatives. The direct non-reducing polyketide synthase dbaI product is 2,4-dihydroxy-3-methyl-6-(2-oxopropyl)benzaldehyde (DHMBA), produced by condensation of one acetyl-CoA starter unit with 4 malonyl-CoA units and one methylation step. The FAD-dependent monooxygenase dbaH is responsible for the synthesis of yellow pigments derived from the oxidation of DHMBA. The roles of dbaB, C, E and F have still to be determined. This Emericella nidulans (strain FGSC A4 / ATCC 38163 / CBS 112.46 / NRRL 194 / M139) (Aspergillus nidulans) protein is Non-reducing polyketide synthase dbaI.